The following is a 379-amino-acid chain: Protein COS2 (379 aa).

Residues 1-72 (MKENELKNEK…WKLSNNCIYP (72 aa)) are Cytoplasmic-facing. A helical transmembrane segment spans residues 73 to 93 (LIVSLLVLFLGPIFVLVICGL). The Extracellular portion of the chain corresponds to 94–254 (SRKRSLSKQL…FLCCIYVSRG (161 aa)). Residues 255 to 275 (MCLLLRTLYLGWILFMLVQGF) traverse the membrane as a helical segment. Over 276–379 (QNIRVLIMSM…QLSRSEVLLV (104 aa)) the chain is Cytoplasmic.

It belongs to the DUP/COS family.

It localises to the membrane. The sequence is that of Protein COS2 (COS2) from Saccharomyces cerevisiae (strain ATCC 204508 / S288c) (Baker's yeast).